Consider the following 154-residue polypeptide: Ribonuclease P protein component (154 aa).

This sequence belongs to the RnpA family. In terms of assembly, consists of a catalytic RNA component (M1 or rnpB) and a protein subunit.

The enzyme catalyses Endonucleolytic cleavage of RNA, removing 5'-extranucleotides from tRNA precursor.. Its function is as follows. RNaseP catalyzes the removal of the 5'-leader sequence from pre-tRNA to produce the mature 5'-terminus. It can also cleave other RNA substrates such as 4.5S RNA. The protein component plays an auxiliary but essential role in vivo by binding to the 5'-leader sequence and broadening the substrate specificity of the ribozyme. The polypeptide is Ribonuclease P protein component (Chlorobaculum tepidum (strain ATCC 49652 / DSM 12025 / NBRC 103806 / TLS) (Chlorobium tepidum)).